We begin with the raw amino-acid sequence, 72 residues long: Translation initiation factor IF-1 (72 aa).

An S1-like domain is found at 1 to 72; that stretch reads MARDDVIEVD…DRGRITFRYK (72 aa).

The protein belongs to the IF-1 family. As to quaternary structure, component of the 30S ribosomal translation pre-initiation complex which assembles on the 30S ribosome in the order IF-2 and IF-3, IF-1 and N-formylmethionyl-tRNA(fMet); mRNA recruitment can occur at any time during PIC assembly.

The protein localises to the cytoplasm. In terms of biological role, one of the essential components for the initiation of protein synthesis. Stabilizes the binding of IF-2 and IF-3 on the 30S subunit to which N-formylmethionyl-tRNA(fMet) subsequently binds. Helps modulate mRNA selection, yielding the 30S pre-initiation complex (PIC). Upon addition of the 50S ribosomal subunit IF-1, IF-2 and IF-3 are released leaving the mature 70S translation initiation complex. The protein is Translation initiation factor IF-1 of Helicobacter acinonychis (strain Sheeba).